The following is a 320-amino-acid chain: Fructose-1,6-bisphosphatase class 1 (320 aa).

Residues Glu105, Asp124, Leu126, and Asp127 each contribute to the Mg(2+) site. Substrate-binding positions include 127–130, Tyr233, and Lys263; that span reads DGSS. Glu269 is a Mg(2+) binding site.

Belongs to the FBPase class 1 family. As to quaternary structure, homotetramer. The cofactor is Mg(2+).

The protein resides in the cytoplasm. It carries out the reaction beta-D-fructose 1,6-bisphosphate + H2O = beta-D-fructose 6-phosphate + phosphate. Its pathway is carbohydrate biosynthesis; gluconeogenesis. This Methanocorpusculum labreanum (strain ATCC 43576 / DSM 4855 / Z) protein is Fructose-1,6-bisphosphatase class 1.